A 199-amino-acid chain; its full sequence is Recombination protein RecR (199 aa).

A C4-type zinc finger spans residues 56 to 71 (CTVCFNVTEQETCNIC). A Toprim domain is found at 79–174 (SVICVVEESK…TVTRLASGLP (96 aa)).

It belongs to the RecR family.

Its function is as follows. May play a role in DNA repair. It seems to be involved in an RecBC-independent recombinational process of DNA repair. It may act with RecF and RecO. This is Recombination protein RecR from Paenarthrobacter aurescens (strain TC1).